We begin with the raw amino-acid sequence, 271 residues long: Structure-specific endonuclease subunit slx1 (271 aa).

The GIY-YIG domain maps to 5–87; sequence NFYCCYLLKS…QNLGISRYTK (83 aa). The SLX1-type zinc finger occupies 180-231; that stretch reads CNLCYECIESDELRANCPFTDCNSINHLTCLASSFLTEECQVLPIEGMCTKC.

This sequence belongs to the SLX1 family. Forms a heterodimer with slx4. Requires Mg(2+) as cofactor. Mn(2+) serves as cofactor.

It is found in the nucleus. It localises to the nucleolus. Its function is as follows. Catalytic subunit of the slx1-slx4 structure-specific endonuclease that resolves DNA secondary structures generated during DNA repair and recombination. Has endonuclease activity towards branched DNA substrates, introducing single-strand cuts in duplex DNA close to junctions with ss-DNA. Has a preference for stem-loop (SL) and splayed arm Y structures. Introduces a single-strand cut in duplex DNA on the 3' side of a double-strand/single-strand junction with respect to the single-strand moving 3' to 5' away from the junction. Plays a critical role in maintaining the integrity of the ribosomal DNA (rDNA) loci, where it has a role in re-starting stalled replication forks. The complex initiates homologous recombination (HR) events, used to maintain rDNA copy number, in the rDNA repeats that are processed by a mechanism that requires rad22, but not rhp51. It is also required for suppression of methyl methanesulfonate (MMS) and UV-C irradiation hypersensitivity of the structural maintenance of chromosome (SMC) protein mutant, smc6-74, by overexpression of brc1. Has Holliday junction resolvase activity in vitro. The protein is Structure-specific endonuclease subunit slx1 of Schizosaccharomyces pombe (strain 972 / ATCC 24843) (Fission yeast).